We begin with the raw amino-acid sequence, 475 residues long: tRNA-dihydrouridine(16/17) synthase [NAD(P)(+)]-like (475 aa).

FMN is bound by residues 23-25 (PMV) and Q79. C108 (proton donor) is an active-site residue. Residues K147, H175, 208-210 (NGN), and 232-233 (AE) contribute to the FMN site. Residues 343 to 388 (GPREGSKENSGGRSKRALEEEEGSMEGLSKNKLKKQLRNPHKTFDP) are disordered. Positions 373 to 383 (NKLKKQLRNPH) are enriched in basic residues.

The protein belongs to the Dus family. Dus1 subfamily. It depends on FMN as a cofactor.

The protein localises to the cytoplasm. It localises to the nucleus. The enzyme catalyses 5,6-dihydrouridine(16) in tRNA + NADP(+) = uridine(16) in tRNA + NADPH + H(+). It catalyses the reaction 5,6-dihydrouridine(16) in tRNA + NAD(+) = uridine(16) in tRNA + NADH + H(+). The catalysed reaction is 5,6-dihydrouridine(17) in tRNA + NAD(+) = uridine(17) in tRNA + NADH + H(+). It carries out the reaction 5,6-dihydrouridine(17) in tRNA + NADP(+) = uridine(17) in tRNA + NADPH + H(+). In terms of biological role, catalyzes the synthesis of dihydrouridine, a modified base found in the D-loop of most tRNAs. Specifically modifies U16 and U17 in cytoplasmic tRNAs. Affects the level of some mature tRNA and thereby the total cellular translation. This Mus musculus (Mouse) protein is tRNA-dihydrouridine(16/17) synthase [NAD(P)(+)]-like (Dus1l).